We begin with the raw amino-acid sequence, 1516 residues long: UDP-glucose:glycoprotein glucosyltransferase 2 (1516 aa).

Residues 1 to 27 form the signal peptide; it reads MAPAKATNVVRLLLGSTALWLSQLGSG. Asparagine 256, asparagine 286, asparagine 920, and asparagine 950 each carry an N-linked (GlcNAc...) asparagine glycan. A glucosyltransferase region spans residues 1220-1516; that stretch reads LHKENKKEKD…QDTILTHDEL (297 aa). Tyrosine 1289 is subject to Phosphotyrosine. The Prevents secretion from ER motif lies at 1513-1516; that stretch reads HDEL.

Belongs to the glycosyltransferase 8 family. In terms of assembly, interacts with METTL23. Interacts with SELENOF. The cofactor is Ca(2+). It depends on Mn(2+) as a cofactor. Higher levels in kidney, pancreas, heart, and skeletal muscle.

Its subcellular location is the endoplasmic reticulum lumen. It localises to the endoplasmic reticulum-Golgi intermediate compartment. It carries out the reaction N(4)-(alpha-D-Man-(1-&gt;2)-alpha-D-Man-(1-&gt;2)-alpha-D-Man-(1-&gt;3)-[alpha-D-Man-(1-&gt;2)-alpha-D-Man-(1-&gt;3)-[alpha-D-Man-(1-&gt;2)-alpha-D-Man-(1-&gt;6)]-alpha-D-Man-(1-&gt;6)]-beta-D-Man-(1-&gt;4)-beta-D-GlcNAc-(1-&gt;4)-beta-D-GlcNAc)-L-asparaginyl-[protein] (N-glucan mannose isomer 9A1,2,3B1,2,3) + UDP-alpha-D-glucose = N(4)-(alpha-D-Glc-(1-&gt;3)-alpha-D-Man-(1-&gt;2)-alpha-D-Man-(1-&gt;2)-alpha-D-Man-(1-&gt;3)-[alpha-D-Man-(1-&gt;2)-alpha-D-Man-(1-&gt;3)-[alpha-D-Man-(1-&gt;2)-alpha-D-Man-(1-&gt;6)]-alpha-D-Man-(1-&gt;6)]-beta-D-Man-(1-&gt;4)-beta-D-GlcNAc-(1-&gt;4)-beta-D-GlcNAc)-L-asparaginyl-[protein] + UDP + H(+). It participates in protein modification; protein glycosylation. With respect to regulation, ethylenediaminetetraacetic acid completely abolishes catalytic activity. Catalytic activity is enhanced by complex formation with SELENOF. Recognizes glycoproteins with minor folding defects. Reglucosylates single N-glycans near the misfolded part of the protein, thus providing quality control for protein folding in the endoplasmic reticulum. Reglucosylated proteins are recognized by calreticulin for recycling to the endoplasmic reticulum and refolding or degradation. This chain is UDP-glucose:glycoprotein glucosyltransferase 2 (UGGT2), found in Homo sapiens (Human).